The following is a 166-amino-acid chain: UPF0561 protein C2orf68 homolog (166 aa).

The segment covering 32 to 49 (NQLDRDDYDKKVKQAAKE) has biased composition (basic and acidic residues). The interval 32 to 107 (NQLDRDDYDK…SELEPPGRQL (76 aa)) is disordered. A compositionally biased stretch (low complexity) spans 91 to 101 (ESSSSGSSELE).

This sequence belongs to the UPF0561 family.

The protein is UPF0561 protein C2orf68 homolog of Mus musculus (Mouse).